The primary structure comprises 342 residues: MRSTKVIHIVGCHAEGEVGDVIVGGVAPPPGETVWEQSRFIANDETLRNFVLNEPRGGVFRHVNLLVPPKDPRAQMGFIIMEPADTPPMSGSNSICVSTVLLDSGIIAMQEPVTHMVLEAPGGIIEVEAECRNGKAERISVRNVPSFADRLDAPLDVTGLGTIMVDTVYGGDSFVIVDAAQIGMKIEPGQARELAEIGVKITKAANEQLGFRHPERDWRHISFCQITEPVTREGDVLTGVNTVAIRPAKLDRSPTGTGCSARMAVLHAKGQMKAGERFIGKSVLGTEFHCRLDKVLELGGKPAISPIISGRAWVTGTSQLMLDPSDPFPHGYRLSDTWPRDE.

The protein belongs to the proline racemase family.

This is an uncharacterized protein from Brucella canis (strain ATCC 23365 / NCTC 10854 / RM-666).